The sequence spans 474 residues: Variant surface glycoprotein MITAT 1.5 (474 aa).

Positions 1-22 (MIHSNKVATVVLALISSWPADG) are cleaved as a signal peptide. 2 disulfides stabilise this stretch: Cys37–Cys161 and Cys144–Cys214. N-linked (GlcNAc...) asparagine glycosylation is found at Asn74 and Asn95. Residue Asn329 is glycosylated (N-linked (GlcNAc...) asparagine). Residues 388–449 (AKDGEGQKNQ…ETDEPDKEKC (62 aa)) are disordered. Composition is skewed to basic and acidic residues over residues 414–423 (TNKEACEKEN) and 435–449 (KGKDGETDEPDKEKC). Asn451 carries GPI-anchor amidated asparagine lipidation. Positions 452 to 474 (GSFLTSKQFAFSVVSAAFMALLF) are cleaved as a propeptide — removed in mature form.

Its subcellular location is the cell membrane. Its function is as follows. VSG forms a coat on the surface of the parasite. The trypanosome evades the immune response of the host by expressing a series of antigenically distinct VSGs from an estimated 1000 VSG genes. The chain is Variant surface glycoprotein MITAT 1.5 from Trypanosoma brucei brucei.